A 366-amino-acid polypeptide reads, in one-letter code: MEQLDQQQAETLSAIAQAATPEAVEAIRVSALGKQGWVSALLKSLGGMTPEQRQSEGPKIHAAREAVTTALAERKSALEGAALEARLAAETVDLSLPAPDLAKGSVHPVSQVMDELAEIFADMGFAVASGPEIEDDWHNFTALNMPETHPARAMHDTFYFPDKDAEGRSMLLRTHTSPVQIRSMLKAGAPLRIIAPGRVYRSDSDATHTPMFHQIEGLVIDKGIHLGHLKWTLETFLKAFFERDDIVLRLRPSYFPFTEPSVEVDVGYTLVNGKRVVGGSGDADNGGWMEVLGSGMVNRKVIEFGGLDPDEWQGFAFGTGVDRLAMLKYGMDDLRAFFDGDARWLGHYGFGALDVPTLSGGVGVRS.

Glutamate 259 serves as a coordination point for Mg(2+).

Belongs to the class-II aminoacyl-tRNA synthetase family. Phe-tRNA synthetase alpha subunit type 1 subfamily. In terms of assembly, tetramer of two alpha and two beta subunits. Mg(2+) is required as a cofactor.

It is found in the cytoplasm. It carries out the reaction tRNA(Phe) + L-phenylalanine + ATP = L-phenylalanyl-tRNA(Phe) + AMP + diphosphate + H(+). The sequence is that of Phenylalanine--tRNA ligase alpha subunit from Novosphingobium aromaticivorans (strain ATCC 700278 / DSM 12444 / CCUG 56034 / CIP 105152 / NBRC 16084 / F199).